Reading from the N-terminus, the 746-residue chain is UvrABC system protein C (746 aa).

The region spanning 18–97 (AKPGVYKWRD…IKEFDPRFNV (80 aa)) is the GIY-YIG domain. Residues 211-246 (RPYIAQLTRDMKEASAELEFEKAARLRDQIQMLETV) form the UVR domain. A disordered region spans residues 557–577 (ANGNDNGEGGSDISGKGHAVP).

This sequence belongs to the UvrC family. In terms of assembly, interacts with UvrB in an incision complex.

It is found in the cytoplasm. Its function is as follows. The UvrABC repair system catalyzes the recognition and processing of DNA lesions. UvrC both incises the 5' and 3' sides of the lesion. The N-terminal half is responsible for the 3' incision and the C-terminal half is responsible for the 5' incision. The sequence is that of UvrABC system protein C from Bifidobacterium longum (strain NCC 2705).